The primary structure comprises 186 residues: Casparian strip membrane protein 3 (186 aa).

The Cytoplasmic portion of the chain corresponds to 1–26 (MKGSSEHGETSKAAPLGRGGVSKGVS). The helical transmembrane segment at 27–47 (VLDLILRFIAIIGTLASAIAM) threads the bilayer. Topologically, residues 48–74 (GTTNETLPFFTQFIRFKAQYSDLPTLT) are extracellular. A glycan (N-linked (GlcNAc...) asparagine) is linked at Asn51. The chain crosses the membrane as a helical span at residues 75 to 95 (FFVVANSIVCAYLILSLPLSI). Topologically, residues 96–107 (VHIIRSRAKYSR) are cytoplasmic. Residues 108–128 (LLLIFLDAAMLALVTAGASAA) traverse the membrane as a helical segment. Residues 129–161 (AAIVYLAHKGNVRANWLAICQQFDSFCERISGS) lie on the Extracellular side of the membrane. The chain crosses the membrane as a helical span at residues 162-182 (LIGSFGAMVMLILLILLSAIA). Topologically, residues 183–186 (LARR) are cytoplasmic.

It belongs to the Casparian strip membrane proteins (CASP) family. Homodimer and heterodimers.

It is found in the cell membrane. Regulates membrane-cell wall junctions and localized cell wall deposition. Required for establishment of the Casparian strip membrane domain (CSD) and the subsequent formation of Casparian strips, a cell wall modification of the root endodermis that determines an apoplastic barrier between the intraorganismal apoplasm and the extraorganismal apoplasm and prevents lateral diffusion. This Sorghum bicolor (Sorghum) protein is Casparian strip membrane protein 3.